The following is a 366-amino-acid chain: MQVKDQLSSLQPYKPGKSPEQMKEVYGDHSFVKLASNENPFGCSPRVLDELQKSWLEHALYPDGGATTLRQIIADKLHVKMEQVLCGSGLDEIIQIISRAVLRAGDNIVTAGATFPQYRHHAIIEGCEVKEVALNNGVYDLEEISSVVDNDTKIVWICNPNNPTGTYVNDRKLTQFIEGISENTLIVIDEAYYEYVTAKDFPETLPLLEKHKNILVLRTFSKAYGLASFRVGYAVGQEELIEKLNVVRLPFNVSSLAQKAATIAFGDDEFIEEIVRVNTEGLQQYESFCRENDIPFYPSQTNFIFLPVENAREIYEACAHAGFIIRPFPNGIRITVGTREQNEGVISVLQQHFENKKRKSRDEENA.

Residues 1–11 (MQVKDQLSSLQ) show a composition bias toward polar residues. Residues 1–21 (MQVKDQLSSLQPYKPGKSPEQ) are disordered. An N6-(pyridoxal phosphate)lysine modification is found at Lys-222.

It belongs to the class-II pyridoxal-phosphate-dependent aminotransferase family. Histidinol-phosphate aminotransferase subfamily. As to quaternary structure, homodimer. Pyridoxal 5'-phosphate serves as cofactor.

The catalysed reaction is L-histidinol phosphate + 2-oxoglutarate = 3-(imidazol-4-yl)-2-oxopropyl phosphate + L-glutamate. It participates in amino-acid biosynthesis; L-histidine biosynthesis; L-histidine from 5-phospho-alpha-D-ribose 1-diphosphate: step 7/9. In Bacillus cereus (strain ATCC 14579 / DSM 31 / CCUG 7414 / JCM 2152 / NBRC 15305 / NCIMB 9373 / NCTC 2599 / NRRL B-3711), this protein is Histidinol-phosphate aminotransferase 2 (hisC2).